The chain runs to 561 residues: Solute carrier family 41 member 2 (561 aa).

The Extracellular segment spans residues 1-150 (MTANTGEPYK…KESSIAMALQ (150 aa)). Residues 151–171 (ILVPFLLAGFGTVSAGMVLDI) form a helical membrane-spanning segment. Residues 172 to 183 (VQHWDVFKNLTE) are Cytoplasmic-facing. The helical transmembrane segment at 184-204 (VFILVPALLGLKGNLEMTLAS) threads the bilayer. The Extracellular segment spans residues 205 to 233 (RLSTAVNVGKMDSPIEKWNLIIGNLALKQ). A helical transmembrane segment spans residues 234–254 (VQATVVGFLAAVFAVILGWIP). Residues 255–270 (DGKYQLDHAILLCSSS) are Cytoplasmic-facing. Residues 271–291 (VATAFIASLLQGIIMVGVIVG) form a helical membrane-spanning segment. Residues 292-301 (SKKTGINPDN) are Extracellular-facing. A helical membrane pass occupies residues 302–322 (VATPIAASFGDLITLAILAWI). Over 323–333 (SQGLYNCLGSY) the chain is Cytoplasmic. A helical membrane pass occupies residues 334–354 (AFVSPLVGVFFLAMTPIWIVI). Over 355 to 364 (ASKHPATRTV) the chain is Extracellular. A helical transmembrane segment spans residues 365–385 (LHSGWEPVITAMLISSIGGLI). The Cytoplasmic segment spans residues 386 to 394 (LDTTVSDPN). A helical membrane pass occupies residues 395 to 415 (LVGIVVYTPVINGIGGNLVAI). At 416-457 (QASRISTYLHLYSIPGELPEDAKGCYHPCRTFCGTGVNNKSA) the chain is on the extracellular side. The helical transmembrane segment at 458-478 (QVLLSLVIPGHLIFLYTIYLM) threads the bilayer. Over 479-487 (KSGHTSLTP) the chain is Cytoplasmic. Residues 488 to 508 (IFVAVYLLAALLQVFALLWIA) form a helical membrane-spanning segment. Residues 509–531 (DWMVHHIWRKGKDPDSFSIPYLT) are Extracellular-facing. A helical transmembrane segment spans residues 532-552 (ALGDLLGTALLAISFHILWII). The Cytoplasmic segment spans residues 553 to 561 (GDRDGDVGD).

This sequence belongs to the SLC41A transporter family.

The protein localises to the cell membrane. The catalysed reaction is Mg(2+)(in) = Mg(2+)(out). It catalyses the reaction Mn(2+)(in) = Mn(2+)(out). It carries out the reaction Co(2+)(in) = Co(2+)(out). The enzyme catalyses Ni(2+)(in) = Ni(2+)(out). The catalysed reaction is Fe(2+)(in) = Fe(2+)(out). In terms of biological role, acts as a plasma-membrane magnesium transporter. Can also mediate the transport of other divalent metal cations in an order of Ba(2+) &gt; Ni(2+) &gt; Co(2+) &gt; Fe(2+) &gt; Mn(2+). The chain is Solute carrier family 41 member 2 (slc41a2) from Xenopus laevis (African clawed frog).